Here is a 276-residue protein sequence, read N- to C-terminus: Large ribosomal subunit protein uL2 (276 aa).

Disordered regions lie at residues 35 to 55 (APLHKKGGRNNQGRLTVRHQG) and 222 to 276 (GSVM…RRKK). Residues 258 to 276 (KTRKKNKHSDKYIVRRRKK) are compositionally biased toward basic residues.

It belongs to the universal ribosomal protein uL2 family. As to quaternary structure, part of the 50S ribosomal subunit. Forms a bridge to the 30S subunit in the 70S ribosome.

Functionally, one of the primary rRNA binding proteins. Required for association of the 30S and 50S subunits to form the 70S ribosome, for tRNA binding and peptide bond formation. It has been suggested to have peptidyltransferase activity; this is somewhat controversial. Makes several contacts with the 16S rRNA in the 70S ribosome. The chain is Large ribosomal subunit protein uL2 from Shouchella clausii (strain KSM-K16) (Alkalihalobacillus clausii).